Consider the following 150-residue polypeptide: Transcriptional repressor NrdR (150 aa).

The interval M1–R26 is disordered. Residues C3–C34 fold into a zinc finger. The ATP-cone domain maps to P49 to E139.

This sequence belongs to the NrdR family. Zn(2+) is required as a cofactor.

Its function is as follows. Negatively regulates transcription of bacterial ribonucleotide reductase nrd genes and operons by binding to NrdR-boxes. This Pelobacter propionicus (strain DSM 2379 / NBRC 103807 / OttBd1) protein is Transcriptional repressor NrdR.